Consider the following 172-residue polypeptide: uncharacterized protein (172 aa).

Helical transmembrane passes span 44–68 (VLVS…AALT), 86–110 (LASY…VFSL), and 117–135 (VVFI…VTLF).

The protein belongs to the chlamydial CPn_0442/CT_006/TC_0274 family.

It localises to the cell membrane. This is an uncharacterized protein from Chlamydia pneumoniae (Chlamydophila pneumoniae).